Consider the following 151-residue polypeptide: MLP-like protein 329 (151 aa).

The protein belongs to the MLP family.

In Arabidopsis thaliana (Mouse-ear cress), this protein is MLP-like protein 329 (MLP329).